Here is a 429-residue protein sequence, read N- to C-terminus: Ribosomal RNA small subunit methyltransferase B (429 aa).

S-adenosyl-L-methionine is bound by residues 254–260 (CAAPGGK), Asp277, Asp303, and Asp322. Cys375 (nucleophile) is an active-site residue.

Belongs to the class I-like SAM-binding methyltransferase superfamily. RsmB/NOP family.

Its subcellular location is the cytoplasm. It carries out the reaction cytidine(967) in 16S rRNA + S-adenosyl-L-methionine = 5-methylcytidine(967) in 16S rRNA + S-adenosyl-L-homocysteine + H(+). Specifically methylates the cytosine at position 967 (m5C967) of 16S rRNA. The polypeptide is Ribosomal RNA small subunit methyltransferase B (Shigella sonnei (strain Ss046)).